Consider the following 88-residue polypeptide: Protein K3 (88 aa).

The 75-residue stretch at 8-82 folds into the S1 motif domain; it reads LPNAGDVIKG…TKGYIDVNYK (75 aa). 2 binding to host EIF2AK2/PKR regions span residues 43-53 and 74-79; these read SVKMHMDRYVE and KGYIDV.

It belongs to the poxviridae K3 protein family. As to quaternary structure, interacts with host EIF2AK2/PKR kinase.

In terms of biological role, viral mimic of EIF2S1/eIF-2alpha that acts as a pseudosubstrate for EIF2AK2/PKR kinase. Inhibits therefore EIF2S1/eIF-2alpha phosphorylation by host EIF2AK2/PKR kinase and prevents protein synthesis shutoff. Determinant of host species specificity. The chain is Protein K3 from Vaccinia virus (strain Western Reserve) (VACV).